The chain runs to 831 residues: Cadherin-related family member 5 (831 aa).

A signal peptide spans 1-28; sequence MGAPALLWPSLLLPWLTVLFGQPPGTLA. At 29-641 the chain is on the extracellular side; the sequence is QTQVCSVNQT…GQRFSTVDMA (613 aa). N-linked (GlcNAc...) asparagine glycans are attached at residues Asn36, Asn45, Asn84, Asn135, Asn143, Asn173, Asn201, Asn287, Asn311, Asn408, and Asn475. 4 Cadherin domains span residues 53–125, 128–240, 252–357, and 358–459; these read VNIF…DNAP, SFEI…TPWF, IHAQ…PLQF, and SQSL…ERER. The disordered stretch occupies residues 452-632; the sequence is IQVSERERTP…STGAGEQGDG (181 aa). A compositionally biased stretch (polar residues) spans 473–491; sequence SSNTTMEAPLTSGTSQRPA. A compositionally biased stretch (low complexity) spans 505–540; the sequence is GGTTLRPPTPASSIPGGSPTLGTSTSPQTTTPGGDS. A compositionally biased stretch (polar residues) spans 541–554; the sequence is AQTPKPGTSHPTAP. Repeat copies occupy residues 541-571 and 572-602. Positions 541 to 614 are 3 X 31 AA approximate tandem repeats; it reads AQTPKPGTSH…TPKPGTSQST (74 aa). The segment covering 555-572 has biased composition (low complexity); it reads TSRTSTSLMTTSSRSDST. 2 stretches are compositionally biased toward polar residues: residues 573–582 and 589–623; these read QTPKPGTSQP and ASTS…SLPS. The 3; truncated repeat unit spans residues 605-614; sequence TPKPGTSQST. The chain crosses the membrane as a helical span at residues 642-662; sequence VLGGVLGALLLLALICLVILV. At 663-831 the chain is on the cytoplasmic side; sequence HKHYRHRLAC…FGVDADNTYI (169 aa). The mediates interaction with USH1C and MYO7B and is required for proper localization to microvilli tips and function in microvilli organization stretch occupies residues 663-831; it reads HKHYRHRLAC…FGVDADNTYI (169 aa). 2 disordered regions span residues 675-774 and 793-831; these read GKAS…GGYK and EPTA…NTYI. Ser699, Ser721, and Ser725 each carry phosphoserine. Residues 716–738 show a composition bias toward pro residues; the sequence is PLRPPSPMSSSPTPPSSTPPSPQ. Thr728 is subject to Phosphothreonine. 2 positions are modified to phosphoserine: Ser736 and Ser753. The span at 761 to 771 shows a compositional bias: basic and acidic residues; it reads LTKERRPEGEG. Phosphothreonine is present on Thr795. Positions 797 to 807 are enriched in low complexity; that stretch reads DVDSASASGSE. 3 positions are modified to phosphoserine: Ser802, Ser804, and Ser806.

In terms of assembly, part of the IMAC/intermicrovillar adhesion complex/intermicrovillar tip-link complex composed of ANKS4B, MYO7B, USH1C, CDHR2 and CDHR5. Interacts (via cytoplasmic domain) with USH1C and MYO7B; required for proper localization of CDHR5 to microvilli tips and its function in brush border differentiation. In terms of processing, N- and O-glycosylated.

It localises to the apical cell membrane. Its subcellular location is the cell projection. The protein localises to the microvillus membrane. In terms of biological role, intermicrovillar adhesion molecule that forms, via its extracellular domain, calcium-dependent heterophilic complexes with CDHR2 on adjacent microvilli. Thereby, controls the packing of microvilli at the apical membrane of epithelial cells. Through its cytoplasmic domain, interacts with microvillus cytoplasmic proteins to form the intermicrovillar adhesion complex/IMAC. This complex plays a central role in microvilli and epithelial brush border differentiation. The chain is Cadherin-related family member 5 from Mus musculus (Mouse).